The sequence spans 129 residues: Small ribosomal subunit protein bS18c (129 aa).

Residues 1 to 20 (MGTSNTQKPQKQVPKRKKYK) form a disordered region.

The protein belongs to the bacterial ribosomal protein bS18 family. As to quaternary structure, part of the 30S ribosomal subunit.

The protein resides in the plastid. It localises to the chloroplast. In Stigeoclonium helveticum (Green alga), this protein is Small ribosomal subunit protein bS18c.